We begin with the raw amino-acid sequence, 259 residues long: Undecaprenyl-diphosphatase 4 (259 aa).

8 helical membrane-spanning segments follow: residues 1 to 21, 39 to 59, 71 to 91, 99 to 119, 133 to 153, 173 to 193, 208 to 228, and 239 to 259; these read MNWL…FLPI, AGLF…FIYY, FSKL…IGLL, ISKT…FLYM, ITYK…FPAI, AAYF…ILQF, SLIV…SWMI, and FAYY…THVF.

It belongs to the UppP family.

It is found in the cell membrane. It carries out the reaction di-trans,octa-cis-undecaprenyl diphosphate + H2O = di-trans,octa-cis-undecaprenyl phosphate + phosphate + H(+). Catalyzes the dephosphorylation of undecaprenyl diphosphate (UPP). Confers resistance to bacitracin. The protein is Undecaprenyl-diphosphatase 4 of Bacillus thuringiensis (strain Al Hakam).